Here is a 1084-residue protein sequence, read N- to C-terminus: Putative tRNA-specific 2-thiouridylase (1084 aa).

The next 3 helical transmembrane spans lie at 1–21, 32–52, and 309–329; these read MLIF…FILT, FIIS…FYVI, and IITI…YLIL. The active-site Nucleophile is the Cys538. Cysteines 538 and 715 form a disulfide. The active-site Cysteine persulfide intermediate is Cys715.

This sequence belongs to the MnmA/TRMU family.

Its subcellular location is the plastid. The protein localises to the apicoplast. It is found in the membrane. It catalyses the reaction S-sulfanyl-L-cysteinyl-[protein] + uridine(34) in tRNA + AH2 + ATP = 2-thiouridine(34) in tRNA + L-cysteinyl-[protein] + A + AMP + diphosphate + H(+). In terms of biological role, catalyzes the 2-thiolation of uridine at the wobble position (U34) of tRNA, leading to the formation of s(2)U34. Required for apicoplast maintenance. In Plasmodium falciparum (isolate 3D7), this protein is Putative tRNA-specific 2-thiouridylase.